The following is a 149-amino-acid chain: Ribosomal RNA large subunit methyltransferase H (149 aa).

Residues Leu-71, Gly-98, and 117–122 (LSKLTL) contribute to the S-adenosyl-L-methionine site.

It belongs to the RNA methyltransferase RlmH family. In terms of assembly, homodimer.

The protein resides in the cytoplasm. The catalysed reaction is pseudouridine(1915) in 23S rRNA + S-adenosyl-L-methionine = N(3)-methylpseudouridine(1915) in 23S rRNA + S-adenosyl-L-homocysteine + H(+). Functionally, specifically methylates the pseudouridine at position 1915 (m3Psi1915) in 23S rRNA. The polypeptide is Ribosomal RNA large subunit methyltransferase H (Campylobacter jejuni subsp. jejuni serotype O:6 (strain 81116 / NCTC 11828)).